The sequence spans 261 residues: Gap junction beta-6 protein (261 aa).

The Cytoplasmic portion of the chain corresponds to 1 to 22 (MDWGTLHTVIGGVNKHSTSIGK). A helical membrane pass occupies residues 23 to 45 (VWITVIFIFRVMILVVAAQEVWG). Residues 46–75 (DEQEDFVCNTLQPGCKNVCYDHFFPVSHIR) are Extracellular-facing. A helical membrane pass occupies residues 76–98 (LWALQLIFVSTPALLVAMHVAYY). Residues 99 to 131 (RHETARKFIRGEKRNEFKDLEDIKRQKVRIEGS) are Cytoplasmic-facing. Residues 132-154 (LWWTYTSSIFFRIIFEAAFMYVF) form a helical membrane-spanning segment. At 155–192 (YFLYNGYHLPWVLKCGIDPCPNLVDCFISRPTEKTVFT) the chain is on the extracellular side. The chain crosses the membrane as a helical span at residues 193–215 (VFMISASVICMLLNVAELCYLLL). Residues 216–261 (KLCFRRSKRTQAQRNHPNHALKESKQNEMNELISDSGQNAITSFPS) are Cytoplasmic-facing.

Belongs to the connexin family. Beta-type (group I) subfamily. In terms of assembly, a connexon is composed of a hexamer of connexins. Interacts with CNST. As to expression, highly expressed in adult brain and skin. Less in uterus, lung and eye. Very low in testis and sciatic nerve. No expression before birth.

It localises to the cell membrane. The protein resides in the cell junction. The protein localises to the gap junction. In terms of biological role, one gap junction consists of a cluster of closely packed pairs of transmembrane channels, the connexons, through which materials of low MW diffuse from one cell to a neighboring cell. The chain is Gap junction beta-6 protein (Gjb6) from Mus musculus (Mouse).